Consider the following 355-residue polypeptide: 3-dehydroquinate synthase (355 aa).

NAD(+) is bound by residues 71-76 (EGEERK), 105-109 (GVVGD), 129-130 (TS), Lys-142, and Lys-151. Positions 184, 246, and 263 each coordinate Zn(2+).

It belongs to the sugar phosphate cyclases superfamily. Dehydroquinate synthase family. Requires Co(2+) as cofactor. Zn(2+) serves as cofactor. NAD(+) is required as a cofactor.

It localises to the cytoplasm. It catalyses the reaction 7-phospho-2-dehydro-3-deoxy-D-arabino-heptonate = 3-dehydroquinate + phosphate. The protein operates within metabolic intermediate biosynthesis; chorismate biosynthesis; chorismate from D-erythrose 4-phosphate and phosphoenolpyruvate: step 2/7. Its function is as follows. Catalyzes the conversion of 3-deoxy-D-arabino-heptulosonate 7-phosphate (DAHP) to dehydroquinate (DHQ). In Streptococcus pneumoniae serotype 19F (strain G54), this protein is 3-dehydroquinate synthase.